The sequence spans 81 residues: Cortexin-3 (81 aa).

Residues 29-49 (MTFVFVILLFIFLGILIVRCF) traverse the membrane as a helical segment.

Belongs to the cortexin family.

It localises to the membrane. This Homo sapiens (Human) protein is Cortexin-3 (CTXN3).